Consider the following 371-residue polypeptide: MQAEKLAYYPFISEASAHVGDLGISLESLLNSRAYRTARARGIERVKEALEGEIKKPPVSEEAQVLSELLSYPFARMLVACVDDQLFTRRYALAEAKAAYTFLRNETPDFLLEFGEDFGISAEIRDSHFSMHFTDYIRFSNSLKEPSWKLTNRQFRAGKIKITKEEFARLLEEAVRERIEQSFPIPEIPPEVSAFCAPYVAEIKEQFEVQKKKFGATDFGAVEPELFPPCISHALANVQGGVNLAHSMRFAMTSFLLNVGMSVEEILNLFNVSPDFDAEKTLYQIEHIAGATGNEYKPPACDTMRTYGNCIGKDGLCAKISHPLGYYERRIFLKNKEREKEEGKEKGNEEKKEKREEHEKKNEKGNEIKEK.

Residues Cys230, Cys301, Cys310, and Cys317 each contribute to the [4Fe-4S] cluster site. The tract at residues 337–371 is disordered; sequence EREKEEGKEKGNEEKKEKREEHEKKNEKGNEIKEK.

This sequence belongs to the eukaryotic-type primase large subunit family. In terms of assembly, heterodimer of a small subunit (PriS) and a large subunit (PriL). Requires [4Fe-4S] cluster as cofactor.

Functionally, regulatory subunit of DNA primase, an RNA polymerase that catalyzes the synthesis of short RNA molecules used as primers for DNA polymerase during DNA replication. Stabilizes and modulates the activity of the small subunit, increasing the rate of DNA synthesis, and conferring RNA synthesis capability. The DNA polymerase activity may enable DNA primase to also catalyze primer extension after primer synthesis. May also play a role in DNA repair. The chain is DNA primase large subunit PriL from Methanosarcina acetivorans (strain ATCC 35395 / DSM 2834 / JCM 12185 / C2A).